We begin with the raw amino-acid sequence, 238 residues long: Purine nucleoside phosphorylase DeoD-type (238 aa).

His-5 provides a ligand contact to a purine D-ribonucleoside. Residues Gly-21, Arg-25, Arg-44, and 88-91 (RVGS) contribute to the phosphate site. A purine D-ribonucleoside contacts are provided by residues 180 to 182 (EME) and 204 to 205 (SD). Asp-205 acts as the Proton donor in catalysis.

It belongs to the PNP/UDP phosphorylase family. Homohexamer; trimer of homodimers.

The catalysed reaction is a purine D-ribonucleoside + phosphate = a purine nucleobase + alpha-D-ribose 1-phosphate. The enzyme catalyses a purine 2'-deoxy-D-ribonucleoside + phosphate = a purine nucleobase + 2-deoxy-alpha-D-ribose 1-phosphate. In terms of biological role, catalyzes the reversible phosphorolytic breakdown of the N-glycosidic bond in the beta-(deoxy)ribonucleoside molecules, with the formation of the corresponding free purine bases and pentose-1-phosphate. The chain is Purine nucleoside phosphorylase DeoD-type from Photorhabdus laumondii subsp. laumondii (strain DSM 15139 / CIP 105565 / TT01) (Photorhabdus luminescens subsp. laumondii).